A 565-amino-acid chain; its full sequence is Sodium/hydrogen exchanger 9B1 (565 aa).

Basic and acidic residues-rich tracts occupy residues 1–14 (MSEH…KDDG) and 23–86 (MSKD…ETQT). Residues 1 to 112 (MSEHDVESNK…RGTNSYCPPQ (112 aa)) are disordered. Transmembrane regions (helical) follow at residues 122-142 (GAAL…EVLP), 146-166 (LFGL…LEFI), 167-187 (KIPV…GFTI), 206-223 (ALRN…GLGL), 238-258 (LSFG…HFIM), 266-286 (FLLG…NMLM), 311-331 (IVAI…GSVI), 341-361 (VLIG…FPSG), 371-391 (AFLV…IGLH), 419-439 (IVAN…GTEV), 449-469 (IGMC…STFV), 482-502 (VFIA…GPLA), and 523-543 (VAFL…GILG).

The protein belongs to the monovalent cation:proton antiporter 1 (CPA1) transporter (TC 2.A.36) family. In terms of tissue distribution, testis-specific. Expressed in the spermatids and spermatozoa (at protein level). Specifically present in the principal piece of sperm tail (at protein level).

It localises to the cell projection. The protein localises to the cilium. It is found in the flagellum membrane. Functionally, sperm-specific Na(+)/H(+) exchanger involved in intracellular pH regulation of spermatozoa. Involved in sperm motility and fertility. This chain is Sodium/hydrogen exchanger 9B1, found in Mus musculus (Mouse).